Consider the following 476-residue polypeptide: MSRFSGALQLTDLDDFITPSQECIKPVTIDKTKSKTGAKITVEADGYYEESESGKQKLQKVEITLQDCLACSGCITSAEGVLITQQSQEELLKVLRENQTLKASGDNEQVRTIVFTISVQPLLSLAHRYDLSLEEAGRHLAGYLQQLGADYVLCTKIADDLALLECRQEFVERFRNNAELSMLSSSCPGWVCYAEKTHGNFILPHIATTRSPQQIMGVLVKQLLAEKLGVSGSRIYHVTIMPCYDKKLEASREDFYSEVSSSRDVDCVITAIEVEQMLQAEEQTLQQFEPKDLHWPWTDQQPESMLWAHESTMSGGYAEHIFKYAAKELFNEDTPTELQFRALRNRDFSEICLEKEGKVLLKFAIANGFRNIQNLVQKLKRGKGPGYQFVEVMACPSGCINGGAQVRPTTGQHVRQLTQQLEELYKQLPRSNPDNTHTKQIYADFFDGTHTDKSAQLLHTSYHAVEKLNTALNIKW.

8 residues coordinate [4Fe-4S] cluster: cysteine 23, cysteine 68, cysteine 71, cysteine 74, cysteine 187, cysteine 243, cysteine 395, and cysteine 399.

It belongs to the NARF family.

In terms of biological role, component of the cytosolic iron-sulfur (Fe/S) protein assembly machinery. Required for maturation of extramitochondrial Fe/S proteins. This Drosophila grimshawi (Hawaiian fruit fly) protein is Probable cytosolic Fe-S cluster assembly factor GH10760.